We begin with the raw amino-acid sequence, 460 residues long: Putative RNA-guided DNA endonuclease MT2953 (460 aa).

Active-site residues include D224 and E313. 4 residues coordinate Zn(2+): C372, C375, C389, and C392. Residue D399 is part of the active site. A disordered region spans residues 415-460 (VVGPVGAAVKRGADRKTGPGPAGGREARKATGHPAGEQPRDGVQVK).

The protein in the N-terminal section; belongs to the transposase 2 family. In the C-terminal section; belongs to the transposase 35 family.

Its function is as follows. An RNA-guided dsDNA endonuclease. When guided by an RNA derived from the right-end element of its insertion sequence element (IS), cleaves DNA downstream of the transposon-associated motif (TAM). Cleaves supercoiled and linear DNA in a staggered manner 15-21 bases from the TAM yielding 5'-overhangs. Binds reRNA, an approximately 150 nucleotide base sRNA derived from the 3' end of its own gene, the right end (RE) of the insertion sequence (IS) plus sequence downstream of the IS. This Mycobacterium tuberculosis (strain CDC 1551 / Oshkosh) protein is Putative RNA-guided DNA endonuclease MT2953.